The following is a 192-amino-acid chain: Protein ORF45 (192 aa).

Functionally, plays a role in the expression of ORF41, which itself is required for late gene expression. The chain is Protein ORF45 from Autographa californica nuclear polyhedrosis virus (AcMNPV).